A 451-amino-acid polypeptide reads, in one-letter code: ESX secretion system protein YukC (451 aa).

The chain crosses the membrane as a helical span at residues 221–241 (IGLGLIVLLVPALIYSMYALF). Residues 362–447 (DEDIQKELDS…KKETEKKDEK (86 aa)) are a coiled coil. The span at 376-386 (LEKAQKERQEN) shows a compositional bias: basic and acidic residues. Positions 376–451 (LEKAQKERQE…EKKDEKKDDK (76 aa)) are disordered. Residues 387–397 (KQSNSETSLVD) show a composition bias toward polar residues. The segment covering 406–451 (DEEKQAEEKAAEEKAAAEEKAKKEEQKEKEDEKKETEKKDEKKDDK) has biased composition (basic and acidic residues).

It belongs to the EssB family.

Its subcellular location is the cell membrane. Required for YukE secretion. Probable component or regulator of the ESX/ESAT-6-like secretion system (BsEss). Required to deliver LXG toxins to target cells. The sequence is that of ESX secretion system protein YukC (yukC) from Bacillus subtilis (strain 168).